The chain runs to 424 residues: Serine hydroxymethyltransferase 2 (424 aa).

(6S)-5,6,7,8-tetrahydrofolate contacts are provided by residues Leu-125 and 129 to 131 (GHL). An N6-(pyridoxal phosphate)lysine modification is found at Lys-234. Residue Glu-250 coordinates (6S)-5,6,7,8-tetrahydrofolate.

Belongs to the SHMT family. As to quaternary structure, homodimer. The cofactor is pyridoxal 5'-phosphate.

The protein resides in the cytoplasm. The catalysed reaction is (6R)-5,10-methylene-5,6,7,8-tetrahydrofolate + glycine + H2O = (6S)-5,6,7,8-tetrahydrofolate + L-serine. It participates in one-carbon metabolism; tetrahydrofolate interconversion. It functions in the pathway amino-acid biosynthesis; glycine biosynthesis; glycine from L-serine: step 1/1. In terms of biological role, catalyzes the reversible interconversion of serine and glycine with tetrahydrofolate (THF) serving as the one-carbon carrier. This reaction serves as the major source of one-carbon groups required for the biosynthesis of purines, thymidylate, methionine, and other important biomolecules. Also exhibits THF-independent aldolase activity toward beta-hydroxyamino acids, producing glycine and aldehydes, via a retro-aldol mechanism. The sequence is that of Serine hydroxymethyltransferase 2 from Cupriavidus pinatubonensis (strain JMP 134 / LMG 1197) (Cupriavidus necator (strain JMP 134)).